The primary structure comprises 200 residues: Glycerol-3-phosphate acyltransferase (200 aa).

The next 5 membrane-spanning stretches (helical) occupy residues 2–22 (FNIPAVAVSYLIGSLSFAVIV), 51–71 (KAAALTLLGDAAKGLVAVLLA), 84–104 (AIAAVALAALVGHMWPVFFGF), 114–134 (LGVLLALSPTTALVCALIWLV), and 158–178 (LFFMPHTSWIFATLAIAILVL).

The protein belongs to the PlsY family. In terms of assembly, probably interacts with PlsX.

Its subcellular location is the cell inner membrane. It catalyses the reaction an acyl phosphate + sn-glycerol 3-phosphate = a 1-acyl-sn-glycero-3-phosphate + phosphate. Its pathway is lipid metabolism; phospholipid metabolism. Catalyzes the transfer of an acyl group from acyl-phosphate (acyl-PO(4)) to glycerol-3-phosphate (G3P) to form lysophosphatidic acid (LPA). This enzyme utilizes acyl-phosphate as fatty acyl donor, but not acyl-CoA or acyl-ACP. The polypeptide is Glycerol-3-phosphate acyltransferase (Neisseria meningitidis serogroup A / serotype 4A (strain DSM 15465 / Z2491)).